We begin with the raw amino-acid sequence, 48 residues long: uncharacterized protein (48 aa).

Residues 1–48 (MLFCNNNNNNNNNNNNNNNNNNNNNNNNNNNNNNNNNNNSSNNNNFSR) are disordered.

This is an uncharacterized protein from Dictyostelium discoideum (Social amoeba).